We begin with the raw amino-acid sequence, 1463 residues long: Secretory phospholipase A2 receptor (1463 aa).

Positions 1–20 (MLLSPSLLLLLLLGAPRGCA) are cleaved as a signal peptide. At 21–1397 (EGVAAALTPE…ALPEKGPSHS (1377 aa)) the chain is on the extracellular side. Positions 38-161 (KGIFVIQSES…GSGGGDICEY (124 aa)) constitute a Ricin B-type lectin domain. 14 cysteine pairs are disulfide-bonded: Cys-51–Cys-64, Cys-89–Cys-106, Cys-178–Cys-204, Cys-192–Cys-219, Cys-260–Cys-354, Cys-330–Cys-346, Cys-406–Cys-501, Cys-478–Cys-493, Cys-617–Cys-634, Cys-699–Cys-796, Cys-774–Cys-788, Cys-840–Cys-937, Cys-914–Cys-929, and Cys-1067–Cys-1087. N-linked (GlcNAc...) asparagine glycosylation occurs at Asn-93. In terms of domain architecture, Fibronectin type-II spans 173 to 221 (THGMPCMFPFQYNHQWHHECTREGREDDLLWCATTSRYERDEKWGFCPD). 8 C-type lectin domains span residues 238–355 (NSHI…YICK), 385–502 (YNRN…YICK), 522–643 (HGGF…MSLC), 673–797 (GLAS…WICK), 819–938 (YQDA…SICK), 965–1096 (FNYK…GFVC), 1121–1232 (YGNR…GAIC), and 1257–1378 (FKSN…FICK). N-linked (GlcNAc...) asparagine glycosylation occurs at Asn-454. Residue Asn-1123 is glycosylated (N-linked (GlcNAc...) asparagine). Intrachain disulfides connect Cys-1209–Cys-1223, Cys-1280–Cys-1377, and Cys-1354–Cys-1369. A helical transmembrane segment spans residues 1398 to 1418 (IIPLAVVLTLIVIVAICTLSF). Residues 1419-1463 (CIYKHNGGFFRRLAGFRNPYYPATNFSTVYLEENILISDLEKSDQ) lie on the Cytoplasmic side of the membrane. The short motif at 1436 to 1442 (NPYYPAT) is the Endocytosis signal element.

In terms of assembly, interacts with sPLA2-IB/PLA2G1B; this interaction mediates intracellular signaling as well as clearance of extracellular sPLA2-IB/PLA2G1B via endocytotic pathway. Interacts with sPLA2-X/PLA2G10; this interaction mediates sPLA2-X/PLA2G10 clearance and inactivation. The secretory phospholipase A2 receptor form may be produced by the action of metalloproteinases. It contains all extracellular domains and only lacks transmembrane and cytosolic regions. It is however unclear whether this form is produced by proteolytic cleavage as suggested by some experiments, or by alternative splicing, as in the case of isoform 2 that shares all characteristics of secretory phospholipase A2 receptor form. As to expression, expressed in podocytes (at protein level). Present in lung macrophage (at protein level). Highly expressed in kidney. Also expressed in pancreas, amnion, choriodecidua and placenta. Isoform 2 is expressed at much lower level.

The protein localises to the cell membrane. It is found in the secreted. Receptor for secretory phospholipase A2 (sPLA2). Acts as a receptor for phospholipase sPLA2-IB/PLA2G1B but not sPLA2-IIA/PLA2G2A. Also able to bind to snake PA2-like toxins. Although its precise function remains unclear, binding of sPLA2 to its receptor participates in both positive and negative regulation of sPLA2 functions as well as clearance of sPLA2. Binding of sPLA2-IB/PLA2G1B induces various effects depending on the cell type, such as activation of the mitogen-activated protein kinase (MAPK) cascade to induce cell proliferation, the production of lipid mediators, selective release of arachidonic acid in bone marrow-derived mast cells. In neutrophils, binding of sPLA2-IB/PLA2G1B can activate p38 MAPK to stimulate elastase release and cell adhesion. May be involved in responses in pro-inflammatory cytokine productions during endotoxic shock. Also has endocytic properties and rapidly internalizes sPLA2 ligands, which is particularly important for the clearance of extracellular sPLA2s to protect their potent enzymatic activities. The soluble secretory phospholipase A2 receptor form is circulating and acts as a negative regulator of sPLA2 functions by blocking the biological functions of sPLA2-IB/PLA2G1B. In podocytes, binding of sPLA2-IB/PLA2G1B can regulate podocyte survival and glomerular homeostasis. The protein is Secretory phospholipase A2 receptor (PLA2R1) of Homo sapiens (Human).